The primary structure comprises 552 residues: MKGCLATMDKELWIERANDSLVKHFYEQQSDIEQREGFESKLTFGTAGIRGKFGLGEGRLNKFTIEKLALGLARYLNAQTNSPTIVIHYDIRHLSTEFAQIIANVLANHQITVYLPDTYKTTPELSFAVRNLNTTAGIMITASHNPKDYNGIKVYGSDGAQLSTDASELASRYIEEVGDPLQIDIPISKQNTSYIKPFPKSVTDDYMKHIQNMIGYIPKSDLQVVFTSLHGTSVPIVPELLKSLNFNQFNLVDAQCKPDPNFSSVQSANPEDHRAFDQAVELANKSHADLLISTDPDADRLGIAERDAHGHITYFNGNQIGALLLNYRIQQTSQLRHRLMIQSIVSSELTKSLARYNNVKYKEVLTGFKFIAQEIRQLDDHQNMIFAFEESYGFLSEPFVRDKDAVQIVPLIIKYASELKLYGKTLKDELEQIYQTVGRHEDTLFSHTLEGLEGKKKIESIMTHFRSNPPQEIQGLKVKAIEDYLTSEVYHLDKDTTSQINSSKSNVIRVLFDEGFIALRPSGTEPKIKLYVSLKCPDFDDVAQKINAMIFS.

The Phosphoserine intermediate role is filled by Ser143. The Mg(2+) site is built by Ser143, Asp295, Asp297, and Asp299.

Belongs to the phosphohexose mutase family. Mg(2+) serves as cofactor.

It carries out the reaction alpha-D-glucose 1-phosphate = alpha-D-glucose 6-phosphate. It functions in the pathway glycolipid metabolism; diglucosyl-diacylglycerol biosynthesis. Its function is as follows. Catalyzes the interconversion between glucose-6-phosphate and alpha-glucose-1-phosphate. This is the first step in the biosynthesis of diglucosyl-diacylglycerol (Glc2-DAG), i.e. the predominant glycolipid found in the S.aureus membrane, which is also used as a membrane anchor for lipoteichoic acid (LTA). The protein is Phosphoglucomutase (pgcA) of Staphylococcus aureus (strain Mu50 / ATCC 700699).